Consider the following 303-residue polypeptide: Diaminopimelate epimerase (303 aa).

Asn-15, Gln-47, and Asn-67 together coordinate substrate. The active-site Proton donor is the Cys-76. Residues 77–78 (GN), Asn-163, Asn-197, and 215–216 (ER) contribute to the substrate site. Cys-224 functions as the Proton acceptor in the catalytic mechanism. 225-226 (GS) contributes to the substrate binding site.

This sequence belongs to the diaminopimelate epimerase family. In terms of assembly, homodimer.

It localises to the cytoplasm. The catalysed reaction is (2S,6S)-2,6-diaminopimelate = meso-2,6-diaminopimelate. It functions in the pathway amino-acid biosynthesis; L-lysine biosynthesis via DAP pathway; DL-2,6-diaminopimelate from LL-2,6-diaminopimelate: step 1/1. Functionally, catalyzes the stereoinversion of LL-2,6-diaminopimelate (L,L-DAP) to meso-diaminopimelate (meso-DAP), a precursor of L-lysine and an essential component of the bacterial peptidoglycan. The chain is Diaminopimelate epimerase from Allorhizobium ampelinum (strain ATCC BAA-846 / DSM 112012 / S4) (Agrobacterium vitis (strain S4)).